A 500-amino-acid chain; its full sequence is ATP synthase subunit beta (500 aa).

157–164 (GGAGVGKT) is a binding site for ATP.

It belongs to the ATPase alpha/beta chains family. As to quaternary structure, F-type ATPases have 2 components, CF(1) - the catalytic core - and CF(0) - the membrane proton channel. CF(1) has five subunits: alpha(3), beta(3), gamma(1), delta(1), epsilon(1). CF(0) has three main subunits: a(1), b(2) and c(9-12). The alpha and beta chains form an alternating ring which encloses part of the gamma chain. CF(1) is attached to CF(0) by a central stalk formed by the gamma and epsilon chains, while a peripheral stalk is formed by the delta and b chains.

It localises to the cell inner membrane. It catalyses the reaction ATP + H2O + 4 H(+)(in) = ADP + phosphate + 5 H(+)(out). Functionally, produces ATP from ADP in the presence of a proton gradient across the membrane. The catalytic sites are hosted primarily by the beta subunits. The sequence is that of ATP synthase subunit beta from Salinibacter ruber (strain DSM 13855 / M31).